The sequence spans 396 residues: Large ribosomal subunit protein uL4A (396 aa).

Over residues K352–T373 the composition is skewed to basic and acidic residues. The tract at residues K352 to K374 is disordered.

This sequence belongs to the universal ribosomal protein uL4 family. Component of the large ribosomal subunit.

The protein localises to the cytoplasm. Its function is as follows. Component of the large ribosomal subunit. The ribosome is a large ribonucleoprotein complex responsible for the synthesis of proteins in the cell. In Xenopus laevis (African clawed frog), this protein is Large ribosomal subunit protein uL4A (rpl4-a).